A 161-amino-acid chain; its full sequence is Nucleotide-binding protein PputGB1_4497 (161 aa).

This sequence belongs to the YajQ family.

Functionally, nucleotide-binding protein. In Pseudomonas putida (strain GB-1), this protein is Nucleotide-binding protein PputGB1_4497.